We begin with the raw amino-acid sequence, 186 residues long: Serine hydrolase RBBP9 (186 aa).

Positions 63 to 67 are involved in binding to RB1; the sequence is LHCDE. Catalysis depends on charge relay system residues Ser-75, Asp-138, and His-165.

It belongs to the RBBP9 family. In terms of assembly, interacts with RB1; the interaction disrupts RB1 binding to E2F1. Interacts with RBL1 and RBL2. As to expression, highly expressed in the spleen, testis and kidney. Also found in the heart, liver, lung and brain.

The catalysed reaction is valacyclovir + H2O = acyclovir + L-valine + H(+). In terms of biological role, serine hydrolase. Catalyzes the hydrolytic activation of amino acid ester of the antiviral prodrug valacyclovir to its corresponding active drug, acyclovir. May negatively regulate basal or autocrine TGF-beta signaling by suppressing SMAD2-SMAD3 phosphorylation. May play a role in the transformation process due to its capacity to confer resistance to the growth-inhibitory effects of TGF-beta through interaction with RB1 and the subsequent displacement of E2F1. This chain is Serine hydrolase RBBP9, found in Rattus norvegicus (Rat).